The primary structure comprises 354 residues: Holliday junction branch migration complex subunit RuvB (354 aa).

Polar residues predominate over residues 1–10 (MAIKRNQGSN). Residues 1 to 36 (MAIKRNQGSNPKPEKKERLTKAETHQEQDNLEESIR) form a disordered region. A compositionally biased stretch (basic and acidic residues) spans 12–36 (KPEKKERLTKAETHQEQDNLEESIR). The tract at residues 13 to 196 (PEKKERLTKA…FGLIQRLKFY (184 aa)) is large ATPase domain (RuvB-L). Residues Ile35, Arg36, Gly77, Lys80, Thr81, Thr82, 143 to 145 (EDY), Arg186, Tyr196, and Arg233 each bind ATP. Thr81 lines the Mg(2+) pocket. The tract at residues 197 to 267 (EPEELALIIK…LAAEALDIYQ (71 aa)) is small ATPAse domain (RuvB-S). The segment at 270–354 (PQGLDWTDRL…EEQLSIFSEQ (85 aa)) is head domain (RuvB-H). Positions 325 and 330 each coordinate DNA.

The protein belongs to the RuvB family. Homohexamer. Forms an RuvA(8)-RuvB(12)-Holliday junction (HJ) complex. HJ DNA is sandwiched between 2 RuvA tetramers; dsDNA enters through RuvA and exits via RuvB. An RuvB hexamer assembles on each DNA strand where it exits the tetramer. Each RuvB hexamer is contacted by two RuvA subunits (via domain III) on 2 adjacent RuvB subunits; this complex drives branch migration. In the full resolvosome a probable DNA-RuvA(4)-RuvB(12)-RuvC(2) complex forms which resolves the HJ.

It is found in the cytoplasm. The catalysed reaction is ATP + H2O = ADP + phosphate + H(+). Functionally, the RuvA-RuvB-RuvC complex processes Holliday junction (HJ) DNA during genetic recombination and DNA repair, while the RuvA-RuvB complex plays an important role in the rescue of blocked DNA replication forks via replication fork reversal (RFR). RuvA specifically binds to HJ cruciform DNA, conferring on it an open structure. The RuvB hexamer acts as an ATP-dependent pump, pulling dsDNA into and through the RuvAB complex. RuvB forms 2 homohexamers on either side of HJ DNA bound by 1 or 2 RuvA tetramers; 4 subunits per hexamer contact DNA at a time. Coordinated motions by a converter formed by DNA-disengaged RuvB subunits stimulates ATP hydrolysis and nucleotide exchange. Immobilization of the converter enables RuvB to convert the ATP-contained energy into a lever motion, pulling 2 nucleotides of DNA out of the RuvA tetramer per ATP hydrolyzed, thus driving DNA branch migration. The RuvB motors rotate together with the DNA substrate, which together with the progressing nucleotide cycle form the mechanistic basis for DNA recombination by continuous HJ branch migration. Branch migration allows RuvC to scan DNA until it finds its consensus sequence, where it cleaves and resolves cruciform DNA. This chain is Holliday junction branch migration complex subunit RuvB, found in Crocosphaera subtropica (strain ATCC 51142 / BH68) (Cyanothece sp. (strain ATCC 51142)).